The sequence spans 377 residues: uncharacterized protein (377 aa).

Residues 1–25 (MAQQTNVAGQKTEKQRKAPFRADHV) form a disordered region. Residues 11-24 (KTEKQRKAPFRADH) show a composition bias toward basic and acidic residues.

To B.subtilis YxjG.

This is an uncharacterized protein from Bacillus subtilis (strain 168).